A 591-amino-acid polypeptide reads, in one-letter code: CTP synthase 1-A (591 aa).

The 255-residue stretch at 300–554 (SIALVGKYTK…LASVGRLSQY (255 aa)) folds into the Glutamine amidotransferase type-1 domain. Catalysis depends on for GATase activity residues Cys-399, His-526, and Glu-528.

The protein belongs to the CTP synthase family.

It catalyses the reaction UTP + L-glutamine + ATP + H2O = CTP + L-glutamate + ADP + phosphate + 2 H(+). It functions in the pathway pyrimidine metabolism; CTP biosynthesis via de novo pathway; CTP from UDP: step 2/2. This enzyme is involved in the de novo synthesis of CTP, a precursor of DNA, RNA and phospholipids. Catalyzes the ATP-dependent amination of UTP to CTP with either L-glutamine or ammonia as a source of nitrogen. The chain is CTP synthase 1-A (ctps1-a) from Xenopus laevis (African clawed frog).